Reading from the N-terminus, the 327-residue chain is MGGGRLPPLWLPLLIAWSEWGNCCLDAPPVVRSPCLQPVRDRNRERNPGSPQLLPYGDRLEVACIFPAHDWPEVSIRVHLCYWPEIVRSLVVDARSGQVLHNDASCYIAGGRWRFEDGGAAQRLSLSFRLITETAGTYTCVLGNETHSLATETTALVADVHDLRHSDRSCDLAFGSRSQTRYLWTPDPSRLRSINCGWEGERHRVVHYIPGTSGLLPSCEEDERELCVPFISQSIADNNCSRRHRVDGARRRYHLRRDYWLTDPKIGLLAAGSVALTSLCHLLCYWCSESYRRLNTEEESEAAEETAAGEASAVAAAAVSEEEQRRE.

The first 23 residues, M1–C23, serve as a signal peptide directing secretion. Residues N144 and N239 are each glycosylated (N-linked (GlcNAc...) asparagine; by host). A disordered region spans residues E298–E327. The span at E305–V319 shows a compositional bias: low complexity.

This is an uncharacterized protein from Human cytomegalovirus (strain AD169) (HHV-5).